We begin with the raw amino-acid sequence, 1966 residues long: Alpha-protein kinase 2 (1966 aa).

Disordered stretches follow at residues 23–65 (NSSP…STGL), 211–231 (AMNSEQSPDQPFSIASNDTDK), 1211–1259 (LKSN…AYSD), 1303–1365 (SLPN…EGAG), 1386–1423 (KTQGKKKKKHVQHGTPKPENDAPTDVRSESRQKNVNGK), and 1437–1463 (NKPVAQPSGKTDITKKDSAQKVMSVRP). Over residues 211-227 (AMNSEQSPDQPFSIASN) the composition is skewed to polar residues. Low complexity predominate over residues 1211-1221 (LKSNKKSSSSD). The segment covering 1325-1342 (SDGKMRSKHKEKPDDKQQ) has biased composition (basic and acidic residues). The span at 1388–1397 (QGKKKKKHVQ) shows a compositional bias: basic residues. The segment covering 1401–1417 (PKPENDAPTDVRSESRQ) has biased composition (basic and acidic residues). The Ig-like domain occupies 1577-1659 (PRVVSEIQAD…SLIVANISVS (83 aa)). The cysteines at positions 1599 and 1649 are disulfide-linked. The region spanning 1702-1934 (KEDFLSDQYF…YCELLGLVSL (233 aa)) is the Alpha-type protein kinase domain. The disordered stretch occupies residues 1937–1966 (KPKRTVAPPKPKTQPVPKKKTFGPVLNAKS).

It belongs to the protein kinase superfamily. Alpha-type protein kinase family. ALPK subfamily. In terms of tissue distribution, expressed in developing cardiac tissue.

Its subcellular location is the basolateral cell membrane. The enzyme catalyses L-seryl-[protein] + ATP = O-phospho-L-seryl-[protein] + ADP + H(+). The catalysed reaction is L-threonyl-[protein] + ATP = O-phospho-L-threonyl-[protein] + ADP + H(+). Its function is as follows. Protein kinase that recognizes phosphorylation sites in which the surrounding peptides have an alpha-helical conformation. Regulates cardiac development and cardiomyocyte differentiation by negatively regulating Wnt/beta-catenin signaling. The polypeptide is Alpha-protein kinase 2 (alpk2) (Danio rerio (Zebrafish)).